The following is a 305-amino-acid chain: UDP-N-acetylenolpyruvoylglucosamine reductase (305 aa).

One can recognise an FAD-binding PCMH-type domain in the interval 22-190 (KVGGAADFFA…LSARFRLQAG (169 aa)). Residue Arg-169 is part of the active site. Ser-220 functions as the Proton donor in the catalytic mechanism. Glu-290 is a catalytic residue.

Belongs to the MurB family. FAD serves as cofactor.

It localises to the cytoplasm. The catalysed reaction is UDP-N-acetyl-alpha-D-muramate + NADP(+) = UDP-N-acetyl-3-O-(1-carboxyvinyl)-alpha-D-glucosamine + NADPH + H(+). It functions in the pathway cell wall biogenesis; peptidoglycan biosynthesis. Its function is as follows. Cell wall formation. This Synechococcus sp. (strain RCC307) protein is UDP-N-acetylenolpyruvoylglucosamine reductase.